The chain runs to 441 residues: MTSMTPQEIVSELDKHIVGQSSAKRAVAIALRNRWRRQQVQGSLRQEITPKNILMIGPTGVGKTEIARRLAKLADAPFIKVEATKFTEVGYVGKDVDSIIRDLADMAVKQTRESEMKKVRARAEDAAEDRILDVLIPPPRGADGAEPAADGTTRQMFRKKLREGLLDDKDIEIDVTESRPHLEIMGPQGMEEMTEQLRSMFSQFGQDKRRTRKLKIAEAMKLLTDEEAGKLVNEEEIKTRALANAEQNGIVFIDEIDKVATRQETSGADVSRQGVQRDLLPLVEGTTVSTKYGMIKTDHILFIASGAFHLSRPSDLIPELQGRFPIRVELESLSVQDFEAILTQTHASLVKQYQALLATEDVTLAFVPQGITRLACIAFEVNERTENIGARRLSTVMERLLDEVSFDATRLSGQTVTIDEGYVDQRLQQLSLNEDLSRYIL.

Residues Val-18, 60 to 65, Asp-254, Glu-319, and Arg-391 contribute to the ATP site; that span reads GVGKTE.

It belongs to the ClpX chaperone family. HslU subfamily. A double ring-shaped homohexamer of HslV is capped on each side by a ring-shaped HslU homohexamer. The assembly of the HslU/HslV complex is dependent on binding of ATP.

The protein localises to the cytoplasm. Functionally, ATPase subunit of a proteasome-like degradation complex; this subunit has chaperone activity. The binding of ATP and its subsequent hydrolysis by HslU are essential for unfolding of protein substrates subsequently hydrolyzed by HslV. HslU recognizes the N-terminal part of its protein substrates and unfolds these before they are guided to HslV for hydrolysis. The chain is ATP-dependent protease ATPase subunit HslU from Verminephrobacter eiseniae (strain EF01-2).